Reading from the N-terminus, the 590-residue chain is MNIYKRLKQDIDVVATSIINKLKSTSDSKEFDSLNDTIPIVLESSKDVNSYDISTNIAMLIAKKMNQNSITLANLFKKKLSHYPYIDNITIAGPGFINFVILQEEWTNYLAIILDGSYRKEYSSIGNNKKVNIEYVSANPTGPLHIGHARAAVYGDVLAALLQCTGYQVTREYYVNDTGVQIDNLAKSVYLRYKQVITGQVADIPKGLYPGEYLISVGTKLAKEYGDKLLTLSEPEYLNIIKDVAVNNLLQSIKADLALIGVRHDVFFSEKKLHDSNVISKVIDLLSVKKLVYTGELSQPKGQSSDNWQPRSQLLFKSTIFGDNQDRPLQKEDGSWSYFASDIAYADNKIKRGFDYVIFILGADHIGYVSRIKAIIQALDFNQDITLDIKICQLVKLIENGVAVKMSKRSGSFTTIRDVYEIVGKDVIRFFMLTRKNNAVLDFDLVKLQEQSRDNPVFYVQYAYVRAGSILRKAKDNANIAYEIFSTNKSDFSLLSTKEELNLIKILAVWSHMLDGAVKNFEPHRIAIYLQKLAAEFHALWNLKSNDLDYRFIVLNDNNLTAARLALATAVREIIREGLKIIGITCVEVM.

Positions 138–148 (ANPTGPLHIGH) match the 'HIGH' region motif.

Belongs to the class-I aminoacyl-tRNA synthetase family. In terms of assembly, monomer.

Its subcellular location is the cytoplasm. The enzyme catalyses tRNA(Arg) + L-arginine + ATP = L-arginyl-tRNA(Arg) + AMP + diphosphate. This is Arginine--tRNA ligase from Orientia tsutsugamushi (strain Boryong) (Rickettsia tsutsugamushi).